Reading from the N-terminus, the 376-residue chain is Mitogen-activated protein kinase 2 (376 aa).

In terms of domain architecture, Protein kinase spans 32–319 (YVPIKPIGRG…VTEALQHPYM (288 aa)). ATP contacts are provided by residues 38 to 46 (IGRGAYGVV) and lysine 61. The Proton acceptor role is filled by aspartate 158. Threonine 191 is modified (phosphothreonine). The TXY motif lies at 191-193 (TEY). At tyrosine 193 the chain carries Phosphotyrosine. Residue threonine 196 is modified to Phosphothreonine.

This sequence belongs to the protein kinase superfamily. CMGC Ser/Thr protein kinase family. MAP kinase subfamily. As to quaternary structure, interacts with MKK3. In terms of processing, dually phosphorylated on Thr-191 and Tyr-193, which activates the enzyme. Phosphorylated on Ser residue. Highest levels in the stem. Present in the leaf, root and flower, but not in seeds.

It catalyses the reaction L-seryl-[protein] + ATP = O-phospho-L-seryl-[protein] + ADP + H(+). The enzyme catalyses L-threonyl-[protein] + ATP = O-phospho-L-threonyl-[protein] + ADP + H(+). With respect to regulation, activated by threonine and tyrosine phosphorylation. The protein is Mitogen-activated protein kinase 2 (MPK2) of Arabidopsis thaliana (Mouse-ear cress).